The chain runs to 265 residues: MNMSVLTLQEYEFEKQFNENEAIQWMQENWKKSFLFSALYAAFIFGGRHLMNKRAKFELRKPLVLWSLTLAVFSIFGALRTGAYMVYILMTKGLKQSVCDQGFYNGPVSKFWAYAFVLSKAPELGDTIFIILRKQKLIFLHWYHHITVLLYSWYSYKDMVAGGGWFMTMNYGVHAVMYSYYALRAAGFRVSRKFAMFITLSQITQMLMGCVVNYLVFCWMQHDQCHSHFQNIFWSSLMYLSYLVLFCHFFFEAYIGKMRKTTKAE.

N2 carries an N-linked (GlcNAc...) asparagine glycan. A run of 7 helical transmembrane segments spans residues 34–51 (FLFSALYAAFIFGGRHLM), 70–90 (LAVFSIFGALRTGAYMVYILM), 111–131 (FWAYAFVLSKAPELGDTIFII), 136–156 (KLIFLHWYHHITVLLYSWYSY), 159–179 (MVAGGGWFMTMNYGVHAVMYS), 197–217 (FITLSQITQMLMGCVVNYLVF), and 232–252 (IFWSSLMYLSYLVLFCHFFFE).

The protein belongs to the ELO family. ELOVL6 subfamily. In terms of processing, N-Glycosylated. Ubiquitous.

It localises to the endoplasmic reticulum membrane. It catalyses the reaction a very-long-chain acyl-CoA + malonyl-CoA + H(+) = a very-long-chain 3-oxoacyl-CoA + CO2 + CoA. The catalysed reaction is hexadecanoyl-CoA + malonyl-CoA + H(+) = 3-oxooctadecanoyl-CoA + CO2 + CoA. The enzyme catalyses (9Z)-hexadecenoyl-CoA + malonyl-CoA + H(+) = 3-oxo-(11Z)-octadecenoyl-CoA + CO2 + CoA. It carries out the reaction dodecanoyl-CoA + malonyl-CoA + H(+) = 3-oxotetradecanoyl-CoA + CO2 + CoA. It catalyses the reaction tetradecanoyl-CoA + malonyl-CoA + H(+) = 3-oxohexadecanoyl-CoA + CO2 + CoA. The catalysed reaction is (9Z)-octadecenoyl-CoA + malonyl-CoA + H(+) = 3-oxo-(11Z)-eicosenoyl-CoA + CO2 + CoA. The enzyme catalyses (9Z,12Z)-octadecadienoyl-CoA + malonyl-CoA + H(+) = (11Z,14Z)-3-oxoicosa-11,14-dienoyl-CoA + CO2 + CoA. It carries out the reaction (9Z,12Z,15Z)-octadecatrienoyl-CoA + malonyl-CoA + H(+) = (11Z,14Z,17Z)-3-oxoeicosatrienoyl-CoA + CO2 + CoA. It participates in lipid metabolism; fatty acid biosynthesis. The reaction is stimulated by the presence of HSD17B12, the enzyme catalyzing the second step of the elongation cycle. Functionally, catalyzes the first and rate-limiting reaction of the four reactions that constitute the long-chain fatty acids elongation cycle. This endoplasmic reticulum-bound enzymatic process allows the addition of 2 carbons to the chain of long- and very long-chain fatty acids (VLCFAs) per cycle. Condensing enzyme that elongates fatty acids with 12, 14 and 16 carbons with higher activity toward C16:0 acyl-CoAs. Catalyzes the synthesis of unsaturated C16 long chain fatty acids and, to a lesser extent, C18:0 and those with low desaturation degree. May participate in the production of saturated and monounsaturated VLCFAs of different chain lengths that are involved in multiple biological processes as precursors of membrane lipids and lipid mediators. This is Very long chain fatty acid elongase 6 from Homo sapiens (Human).